A 140-amino-acid polypeptide reads, in one-letter code: Regulator of ribonuclease activity B (140 aa).

Positions 115 to 140 (FEDPNAQDDDEDDGEAIDEDDNGIRH) are disordered. The span at 119-140 (NAQDDDEDDGEAIDEDDNGIRH) shows a compositional bias: acidic residues.

It belongs to the RraB family. As to quaternary structure, interacts with the C-terminal region of Rne.

Its subcellular location is the cytoplasm. Its function is as follows. Globally modulates RNA abundance by binding to RNase E (Rne) and regulating its endonucleolytic activity. Can modulate Rne action in a substrate-dependent manner by altering the composition of the degradosome. This Pantoea ananatis (strain LMG 20103) protein is Regulator of ribonuclease activity B.